The following is a 131-amino-acid chain: Small ribosomal subunit protein uS9 (131 aa).

Belongs to the universal ribosomal protein uS9 family.

This Haemophilus ducreyi (strain 35000HP / ATCC 700724) protein is Small ribosomal subunit protein uS9.